The chain runs to 128 residues: NADPH-dependent 7-cyano-7-deazaguanine reductase (128 aa).

Catalysis depends on cysteine 34, which acts as the Thioimide intermediate. Catalysis depends on aspartate 41, which acts as the Proton donor. Substrate contacts are provided by residues 56-58 and 75-76; these read IEL and HE.

It belongs to the GTP cyclohydrolase I family. QueF type 1 subfamily.

It localises to the cytoplasm. The enzyme catalyses 7-aminomethyl-7-carbaguanine + 2 NADP(+) = 7-cyano-7-deazaguanine + 2 NADPH + 3 H(+). Its pathway is tRNA modification; tRNA-queuosine biosynthesis. Its function is as follows. Catalyzes the NADPH-dependent reduction of 7-cyano-7-deazaguanine (preQ0) to 7-aminomethyl-7-deazaguanine (preQ1). This is NADPH-dependent 7-cyano-7-deazaguanine reductase from Ruthia magnifica subsp. Calyptogena magnifica.